We begin with the raw amino-acid sequence, 442 residues long: Histidine--tRNA ligase (442 aa).

It belongs to the class-II aminoacyl-tRNA synthetase family. In terms of assembly, homodimer.

The protein resides in the cytoplasm. It catalyses the reaction tRNA(His) + L-histidine + ATP = L-histidyl-tRNA(His) + AMP + diphosphate + H(+). This chain is Histidine--tRNA ligase, found in Helicobacter pylori (strain HPAG1).